Consider the following 173-residue polypeptide: RNA pyrophosphohydrolase (173 aa).

The Nudix hydrolase domain maps to 6–149; sequence GFRANVGIIL…KRSVYRRALQ (144 aa). Positions 38–59 match the Nudix box motif; sequence GGIDRGETPMDAMYRELWEEVG.

Belongs to the Nudix hydrolase family. RppH subfamily. It depends on a divalent metal cation as a cofactor.

In terms of biological role, accelerates the degradation of transcripts by removing pyrophosphate from the 5'-end of triphosphorylated RNA, leading to a more labile monophosphorylated state that can stimulate subsequent ribonuclease cleavage. This chain is RNA pyrophosphohydrolase, found in Psychrobacter cryohalolentis (strain ATCC BAA-1226 / DSM 17306 / VKM B-2378 / K5).